The sequence spans 169 residues: Peptide deformylase (169 aa).

Residues Cys94 and His136 each coordinate Fe cation. Glu137 is an active-site residue. His140 provides a ligand contact to Fe cation.

This sequence belongs to the polypeptide deformylase family. The cofactor is Fe(2+).

The catalysed reaction is N-terminal N-formyl-L-methionyl-[peptide] + H2O = N-terminal L-methionyl-[peptide] + formate. Removes the formyl group from the N-terminal Met of newly synthesized proteins. Requires at least a dipeptide for an efficient rate of reaction. N-terminal L-methionine is a prerequisite for activity but the enzyme has broad specificity at other positions. This chain is Peptide deformylase, found in Desulfotalea psychrophila (strain LSv54 / DSM 12343).